Reading from the N-terminus, the 163-residue chain is Myosin light chain 2 (163 aa).

2 consecutive EF-hand domains span residues 15 to 50 (DYIN…LGKT) and 92 to 127 (PERE…AGFE). Residues aspartate 28, aspartate 30, aspartate 32, and aspartate 39 each contribute to the Ca(2+) site.

As to quaternary structure, interacts with the IQ domain of MYO1.

The protein resides in the bud neck. Its function is as follows. Regulatory light chain for the class II conventional myosin MYO1. May play a role in the disassembly of the MYO1 ring at the bud neck at the end of its contraction during cytokinesis. The protein is Myosin light chain 2 (MLC2) of Saccharomyces cerevisiae (strain ATCC 204508 / S288c) (Baker's yeast).